Here is a 365-residue protein sequence, read N- to C-terminus: Caffeic acid 3-O-methyltransferase (365 aa).

130–136 (MNQDKVL) contributes to the substrate binding site. A substrate binding region spans residues 162–180 (AFEYHGTDPRFNKVFNRGM). G208, D231, D251, M252, and K265 together coordinate S-adenosyl-L-methionine. H269 acts as the Proton acceptor in catalysis.

This sequence belongs to the class I-like SAM-binding methyltransferase superfamily. Cation-independent O-methyltransferase family. COMT subfamily. Homodimer.

It catalyses the reaction (E)-caffeate + S-adenosyl-L-methionine = (E)-ferulate + S-adenosyl-L-homocysteine + H(+). Its pathway is aromatic compound metabolism; phenylpropanoid biosynthesis. Catalyzes the conversion of caffeic acid to ferulic acid and of 5-hydroxyferulic acid to sinapic acid. The resulting products may subsequently be converted to the corresponding alcohols that are incorporated into lignins. This chain is Caffeic acid 3-O-methyltransferase (COMT1), found in Prunus dulcis (Almond).